The primary structure comprises 151 residues: Major latex allergen Hev b 5 (151 aa).

A disordered region spans residues 1 to 151 (MASVEVESAA…TEVPVEKTEE (151 aa)). The residue at position 2 (Ala-2) is an N-acetylalanine. Residues 17–31 (ETPEVTKAEETKTEE) are compositionally biased toward basic and acidic residues. 2 stretches are compositionally biased toward low complexity: residues 36-45 (PASEQETADA) and 53-64 (TAAPAEPEAPAP). 3 stretches are compositionally biased toward basic and acidic residues: residues 65 to 80 (ETEK…KTEE), 103 to 113 (EEPKHETKETE), and 122 to 133 (EGEKPAEEEKPI). The segment covering 134–144 (TEAAETATTEV) has biased composition (low complexity).

This sequence to kiwi fruit protein PKIWI501. The N-terminus is blocked.

The chain is Major latex allergen Hev b 5 from Hevea brasiliensis (Para rubber tree).